The chain runs to 86 residues: High affinity immunoglobulin epsilon receptor subunit gamma (86 aa).

An N-terminal signal peptide occupies residues 1 to 18; that stretch reads MIPAVILFLLLLVEEAAA. The Extracellular segment spans residues 19–23; that stretch reads LGEPQ. Residues 24 to 44 form a helical membrane-spanning segment; that stretch reads LCYILDAILFLYGIVLTLLYC. Residues 45 to 86 lie on the Cytoplasmic side of the membrane; that stretch reads RLKIQVRKADIASREKSDAVYTGLNTRNQETYETLKHEKPPQ. The 29-residue stretch at 54–82 folds into the ITAM domain; the sequence is DIASREKSDAVYTGLNTRNQETYETLKHE. 2 positions are modified to phosphotyrosine: tyrosine 65 and tyrosine 76. The residue at position 78 (threonine 78) is a Phosphothreonine.

This sequence belongs to the CD3Z/FCER1G family. IgE Fc receptor is a tetramer of an alpha chain, a beta chain, and two disulfide linked gamma chains. Associates with FCGR1A to form a functional receptor complex. The signaling subunit of immunoglobulin gamma (IgG) Fc receptor complex. As a homodimer or a heterodimer of CD247 and FCER1G, associates with the ligand binding subunit FCGR3A to form a functional receptor complex. Associates with CLEC6A. Interacts with CLEC4E. Interacts (via ITAM domain) with SYK (via SH2 domains); activates SYK, enabling integrin-mediated activation of neutrophils and macrophages. Interacts with common beta chain of interleukin 3 receptor CSF2RB and recruits SYK in response to IL3 stimulation; this interaction is direct. Interacts with CD300LH; the interaction may be indirect. Interacts with CD300LD. Interacts with TARM1. In terms of tissue distribution, expressed in leukocytes and pinealocytes. Expression in the pineal gland does not undergo circadian variations.

It localises to the cell membrane. Adapter protein containing an immunoreceptor tyrosine-based activation motif (ITAM) that transduces activation signals from various immunoreceptors. As a component of the high-affinity immunoglobulin E (IgE) receptor, mediates allergic inflammatory signaling in mast cells. As a constitutive component of interleukin-3 receptor complex, selectively mediates interleukin 4/IL4 production by basophils priming T-cells toward effector T-helper 2 subset. Associates with pattern recognition receptors CLEC4D and CLEC4E to form a functional signaling complex in myeloid cells. Binding of mycobacterial trehalose 6,6'-dimycolate (TDM) to this receptor complex leads to phosphorylation of ITAM, triggering activation of SYK, CARD9 and NF-kappa-B, consequently driving maturation of antigen-presenting cells and shaping antigen-specific priming of T-cells toward effector T-helper 1 and T-helper 17 cell subtypes. May function cooperatively with other activating receptors. Functionally linked to integrin beta-2/ITGB2-mediated neutrophil activation. Also involved in integrin alpha-2/ITGA2-mediated platelet activation. This chain is High affinity immunoglobulin epsilon receptor subunit gamma (Fcer1g), found in Rattus norvegicus (Rat).